The chain runs to 380 residues: MGRRRQGPAQPASELPARNACLLPNGSAWLPGWAEPDGNGSAGPQDEQLEPAHISPAIPVIITAVYSVVFVVGLVGNSLVMFVIIRYTKMKTATNIYIFNLALADALVTTTMPFQSTVYLMNSWPFGDVLCKIVISIDYYNMFTSIFTLTMMSVDRYIAVCHPVKALDFRTPLKAKIINICIWLLSSSVGISAIILGGTKVREDVDIIECSLQFPDDDYSWWDLFMKICVFVFAFVIPVLIIIVCYTLMILRLKSVRLLSGSREKDRNLRRITRLVLVVVAVFIICWTPIHIFILVEALGSTSHSTAALSSYYFCIALGYTNSSLNPILYAFLDENFKRCFRDFCFPIKMRMERQSTSRVRNTVQDPAYMRNVDGVNKPV.

Residues 1-57 lie on the Extracellular side of the membrane; the sequence is MGRRRQGPAQPASELPARNACLLPNGSAWLPGWAEPDGNGSAGPQDEQLEPAHISPA. 2 N-linked (GlcNAc...) asparagine glycosylation sites follow: N25 and N39. Residues 58–85 traverse the membrane as a helical segment; it reads IPVIITAVYSVVFVVGLVGNSLVMFVII. Residues 86–95 lie on the Cytoplasmic side of the membrane; that stretch reads RYTKMKTATN. Residues 96–119 traverse the membrane as a helical segment; sequence IYIFNLALADALVTTTMPFQSTVY. At 120–132 the chain is on the extracellular side; sequence LMNSWPFGDVLCK. A disulfide bridge connects residues C131 and C210. Residues 133–154 traverse the membrane as a helical segment; the sequence is IVISIDYYNMFTSIFTLTMMSV. Residues 155-173 lie on the Cytoplasmic side of the membrane; sequence DRYIAVCHPVKALDFRTPL. A helical transmembrane segment spans residues 174-196; it reads KAKIINICIWLLSSSVGISAIIL. Residues 197 to 222 lie on the Extracellular side of the membrane; the sequence is GGTKVREDVDIIECSLQFPDDDYSWW. The chain crosses the membrane as a helical span at residues 223–247; it reads DLFMKICVFVFAFVIPVLIIIVCYT. The Cytoplasmic segment spans residues 248–274; it reads LMILRLKSVRLLSGSREKDRNLRRITR. Residues 275–296 traverse the membrane as a helical segment; sequence LVLVVVAVFIICWTPIHIFILV. The Extracellular portion of the chain corresponds to 297-311; it reads EALGSTSHSTAALSS. Residues 312-333 traverse the membrane as a helical segment; sequence YYFCIALGYTNSSLNPILYAFL. Residues 334-380 lie on the Cytoplasmic side of the membrane; the sequence is DENFKRCFRDFCFPIKMRMERQSTSRVRNTVQDPAYMRNVDGVNKPV. Residue C345 is the site of S-palmitoyl cysteine attachment.

It belongs to the G-protein coupled receptor 1 family. In terms of assembly, interacts with NHERF1. Interacts with GABARAPL1.

The protein resides in the cell membrane. In terms of biological role, G-protein coupled opioid receptor that functions as a receptor for endogenous alpha-neoendorphins and dynorphins, but has low affinity for beta-endorphins. Also functions as a receptor for various synthetic opioids and for the psychoactive diterpene salvinorin A. Ligand binding causes a conformation change that triggers signaling via guanine nucleotide-binding proteins (G proteins) and modulates the activity of down-stream effectors, such as adenylate cyclase. Signaling leads to the inhibition of adenylate cyclase activity. Inhibits neurotransmitter release by reducing calcium ion currents and increasing potassium ion conductance. Plays a role in the perception of pain. Plays a role in mediating reduced physical activity upon treatment with synthetic opioids. Plays a role in the regulation of salivation in response to synthetic opioids. May play a role in arousal and regulation of autonomic and neuroendocrine functions. The sequence is that of Kappa-type opioid receptor (OPRK1) from Cavia porcellus (Guinea pig).